A 214-amino-acid polypeptide reads, in one-letter code: tRNA (guanine-N(7)-)-methyltransferase (214 aa).

E44, E69, D96, and D118 together coordinate S-adenosyl-L-methionine. D118 is an active-site residue. Residues K122, D154, and 191–194 (TEYE) contribute to the substrate site.

This sequence belongs to the class I-like SAM-binding methyltransferase superfamily. TrmB family.

It carries out the reaction guanosine(46) in tRNA + S-adenosyl-L-methionine = N(7)-methylguanosine(46) in tRNA + S-adenosyl-L-homocysteine. Its pathway is tRNA modification; N(7)-methylguanine-tRNA biosynthesis. Catalyzes the formation of N(7)-methylguanine at position 46 (m7G46) in tRNA. In Listeria monocytogenes serovar 1/2a (strain ATCC BAA-679 / EGD-e), this protein is tRNA (guanine-N(7)-)-methyltransferase.